The following is a 558-amino-acid chain: Potassium-transporting ATPase potassium-binding subunit (558 aa).

The next 12 membrane-spanning stretches (helical) occupy residues M1–L21, I60–I80, V129–L149, F169–G189, W246–F266, I281–F301, F326–V346, L353–G373, V376–I396, I415–I435, I485–L505, and L523–P543.

This sequence belongs to the KdpA family. As to quaternary structure, the system is composed of three essential subunits: KdpA, KdpB and KdpC.

The protein localises to the cell membrane. Functionally, part of the high-affinity ATP-driven potassium transport (or Kdp) system, which catalyzes the hydrolysis of ATP coupled with the electrogenic transport of potassium into the cytoplasm. This subunit binds the extracellular potassium ions and delivers the ions to the membrane domain of KdpB through an intramembrane tunnel. This is Potassium-transporting ATPase potassium-binding subunit from Staphylococcus haemolyticus (strain JCSC1435).